A 310-amino-acid polypeptide reads, in one-letter code: Altered inheritance of mitochondria protein 46, mitochondrial (310 aa).

The N-terminal 20 residues, 1 to 20, are a transit peptide targeting the mitochondrion; that stretch reads MRLISKVLVKTNCLEVGMRR.

This sequence belongs to the AIM18/AIM46 family.

The protein resides in the mitochondrion. This is Altered inheritance of mitochondria protein 46, mitochondrial (AIM46) from Saccharomyces cerevisiae (strain YJM789) (Baker's yeast).